The following is a 432-amino-acid chain: Glutamate-1-semialdehyde 2,1-aminomutase 2 (432 aa).

Position 268 is an N6-(pyridoxal phosphate)lysine (K268).

This sequence belongs to the class-III pyridoxal-phosphate-dependent aminotransferase family. HemL subfamily. In terms of assembly, homodimer. Requires pyridoxal 5'-phosphate as cofactor.

The protein localises to the cytoplasm. The enzyme catalyses (S)-4-amino-5-oxopentanoate = 5-aminolevulinate. Its pathway is porphyrin-containing compound metabolism; protoporphyrin-IX biosynthesis; 5-aminolevulinate from L-glutamyl-tRNA(Glu): step 2/2. In Listeria monocytogenes serotype 4b (strain F2365), this protein is Glutamate-1-semialdehyde 2,1-aminomutase 2.